The sequence spans 458 residues: Exodeoxyribonuclease 7 large subunit (458 aa).

This sequence belongs to the XseA family. Heterooligomer composed of large and small subunits.

The protein localises to the cytoplasm. The catalysed reaction is Exonucleolytic cleavage in either 5'- to 3'- or 3'- to 5'-direction to yield nucleoside 5'-phosphates.. Bidirectionally degrades single-stranded DNA into large acid-insoluble oligonucleotides, which are then degraded further into small acid-soluble oligonucleotides. The polypeptide is Exodeoxyribonuclease 7 large subunit (Sodalis glossinidius (strain morsitans)).